We begin with the raw amino-acid sequence, 83 residues long: Toxin TdNa3 (83 aa).

A signal peptide spans Met1–Ser20. The LCN-type CS-alpha/beta domain occupies Lys21–Gly82. 4 disulfides stabilise this stretch: Cys31-Cys81, Cys35-Cys57, Cys43-Cys62, and Cys47-Cys64. Position 81 is a cysteine amide (Cys81).

The protein belongs to the long (4 C-C) scorpion toxin superfamily. Sodium channel inhibitor family. Beta subfamily. Expressed by the venom gland.

It localises to the secreted. Its function is as follows. Inhibits the sodium currents (Nav) in an apparent irreversible manner. Produces small depolarization and induces repetitive firing in squid axons. Is specific for arthropods (crickets, triatomides, crabs and squids), but is non-toxic to mice. In Tityus discrepans (Venezuelan scorpion), this protein is Toxin TdNa3.